We begin with the raw amino-acid sequence, 98 residues long: MTPTYMNIMLAFTISLLGMLTYRSHLMASLLCLEGMMMSLFIMTTLIALNTHSPLINIMPIILLVFAACEAAVGLALLVSISNTYGLDYIHNLNLLQC.

A run of 3 helical transmembrane segments spans residues 1–21, 29–49, and 61–81; these read MTPT…GMLT, SLLC…LIAL, and IILL…LVSI.

Belongs to the complex I subunit 4L family. As to quaternary structure, core subunit of respiratory chain NADH dehydrogenase (Complex I) which is composed of 45 different subunits.

The protein localises to the mitochondrion inner membrane. The catalysed reaction is a ubiquinone + NADH + 5 H(+)(in) = a ubiquinol + NAD(+) + 4 H(+)(out). Functionally, core subunit of the mitochondrial membrane respiratory chain NADH dehydrogenase (Complex I) which catalyzes electron transfer from NADH through the respiratory chain, using ubiquinone as an electron acceptor. Part of the enzyme membrane arm which is embedded in the lipid bilayer and involved in proton translocation. The polypeptide is NADH-ubiquinone oxidoreductase chain 4L (MT-ND4L) (Macaca pagensis (Mentawai macaque)).